The sequence spans 259 residues: Ubiquitin-conjugating enzyme E2 J2 (259 aa).

Residues methionine 1–histidine 226 lie on the Cytoplasmic side of the membrane. Positions threonine 12 to glutamate 162 constitute a UBC core domain. The Glycyl thioester intermediate role is filled by cysteine 94. Residues glycine 227–tyrosine 247 traverse the membrane as a helical; Anchor for type IV membrane protein segment. Topologically, residues threonine 248–glutamate 259 are lumenal.

It belongs to the ubiquitin-conjugating enzyme family. In terms of processing, auto-ubiquitinated.

Its subcellular location is the endoplasmic reticulum membrane. It catalyses the reaction S-ubiquitinyl-[E1 ubiquitin-activating enzyme]-L-cysteine + [E2 ubiquitin-conjugating enzyme]-L-cysteine = [E1 ubiquitin-activating enzyme]-L-cysteine + S-ubiquitinyl-[E2 ubiquitin-conjugating enzyme]-L-cysteine.. It functions in the pathway protein modification; protein ubiquitination. Its function is as follows. Catalyzes the covalent attachment of ubiquitin to other proteins. Seems to function in the selective degradation of misfolded membrane proteins from the endoplasmic reticulum (ERAD). In cooperation with the GATOR2 complex, catalyzes 'Lys-6'-linked ubiquitination of NPRL2. This is Ubiquitin-conjugating enzyme E2 J2 (UBE2J2) from Homo sapiens (Human).